The primary structure comprises 886 residues: Leucine-rich repeat-containing protein sog2 (886 aa).

LRR repeat units follow at residues 28–49, 53–74, 76–97, 99–120, 122–143, and 145–166; these read NALT…QLER, RIAR…ILKF, RLRY…LCRL, SLEI…FGAL, NLKV…IAHM, and NLEI…IANN. Disordered regions lie at residues 236 to 288, 301 to 364, 394 to 431, and 455 to 483; these read SPGM…THPP, SPRQ…ASPI, PTQL…STRL, and RIFA…TNDS. A compositionally biased stretch (polar residues) spans 243 to 277; that stretch reads VTPSPHSHSPAGHQQSTPKSTLSKTNENSEGTLYD. Ser-301 is subject to Phosphoserine. Polar residues-rich tracts occupy residues 312–347, 394–406, and 419–431; these read SLAT…SSVA, PTQL…TSAI, and SNST…STRL. At Ser-464 the chain carries Phosphoserine.

It localises to the cytoplasm. The protein resides in the nucleus. The protein is Leucine-rich repeat-containing protein sog2 of Schizosaccharomyces pombe (strain 972 / ATCC 24843) (Fission yeast).